Reading from the N-terminus, the 971-residue chain is Translation initiation factor IF-2 (971 aa).

Over residues 48–63 (DHLRKSHGATDGDKRK) the composition is skewed to basic and acidic residues. 2 disordered regions span residues 48-86 (DHLR…ARTI) and 100-381 (DDVA…STFQ). Residues 105–114 (GADQGQAQVA) show a composition bias toward low complexity. The span at 121–181 (ELKRREEEAR…EEEAATKRAA (61 aa)) shows a compositional bias: basic and acidic residues. Residues 182 to 202 (AEVAAAQQQAAAQQAAAEQEA) are compositionally biased toward low complexity. Residues 210–261 (DEARAAAERAAQREAAKKAEDAAREAADKARAEQEEISKRRAAAEAEARAIR) are compositionally biased toward basic and acidic residues. The segment covering 277-286 (PPKPVEPPKP) has biased composition (pro residues). Over residues 304–326 (ARPAVKKPAGAAAPATTQAPAGA) the composition is skewed to low complexity. Residues 356–369 (SSGGVDRGWRGGPK) show a composition bias toward gly residues. Residues 471-640 (PRPPVVTVMG…LLQAEVLELK (170 aa)) form the tr-type G domain. The interval 480-487 (GHVDHGKT) is G1. 480–487 (GHVDHGKT) serves as a coordination point for GTP. The G2 stretch occupies residues 505–509 (GITQH). Residues 526 to 529 (DTPG) are G3. GTP contacts are provided by residues 526 to 530 (DTPGH) and 580 to 583 (NKID). The segment at 580-583 (NKID) is G4. The G5 stretch occupies residues 616-618 (SAK).

Belongs to the TRAFAC class translation factor GTPase superfamily. Classic translation factor GTPase family. IF-2 subfamily.

Its subcellular location is the cytoplasm. In terms of biological role, one of the essential components for the initiation of protein synthesis. Protects formylmethionyl-tRNA from spontaneous hydrolysis and promotes its binding to the 30S ribosomal subunits. Also involved in the hydrolysis of GTP during the formation of the 70S ribosomal complex. This chain is Translation initiation factor IF-2, found in Burkholderia orbicola (strain AU 1054).